Consider the following 276-residue polypeptide: Potassium/proton antiporter CemA (276 aa).

3 helical membrane-spanning segments follow: residues 59-79 (LLLLILIPVLVNQMSKSWIFG), 199-219 (FFIILFTDMFIGFHSPHGWEV), and 236-256 (FIFLFIATFPVALDTVFKYWI).

The protein belongs to the CemA family.

Its subcellular location is the plastid. It is found in the chloroplast inner membrane. It catalyses the reaction K(+)(in) + H(+)(out) = K(+)(out) + H(+)(in). Functionally, contributes to K(+)/H(+) antiport activity by supporting proton efflux to control proton extrusion and homeostasis in chloroplasts in a light-dependent manner to modulate photosynthesis. Prevents excessive induction of non-photochemical quenching (NPQ) under continuous-light conditions. Indirectly promotes efficient inorganic carbon uptake into chloroplasts. The protein is Potassium/proton antiporter CemA of Cyanidioschyzon merolae (strain NIES-3377 / 10D) (Unicellular red alga).